The following is a 1488-amino-acid chain: Chromosome partition protein MukB (1488 aa).

Residue 34 to 41 (GGNGAGKS) participates in ATP binding. Coiled-coil stretches lie at residues 326 to 418 (LEAD…QYNQ), 444 to 472 (LDTF…QTAH), and 509 to 602 (RHLA…QRAP). Residues 666-783 (PGGAEDQRLN…SLPIFGRAAR (118 aa)) are flexible hinge. Coiled-coil stretches lie at residues 835–923 (EAEI…AKLE), 977–1116 (EMLS…AKAG), and 1209–1265 (VEAI…LQSV). The segment at 1049–1074 (ADSGAEERARQRRDELHAQLSNNRSR) is disordered. Basic and acidic residues predominate over residues 1051–1065 (SGAEERARQRRDELH).

Belongs to the SMC family. MukB subfamily. Homodimerization via its hinge domain. Binds to DNA via its C-terminal region. Interacts, and probably forms a ternary complex, with MukE and MukF via its C-terminal region. The complex formation is stimulated by calcium or magnesium. Interacts with tubulin-related protein FtsZ.

It is found in the cytoplasm. Its subcellular location is the nucleoid. Its function is as follows. Plays a central role in chromosome condensation, segregation and cell cycle progression. Functions as a homodimer, which is essential for chromosome partition. Involved in negative DNA supercoiling in vivo, and by this means organize and compact chromosomes. May achieve or facilitate chromosome segregation by condensation DNA from both sides of a centrally located replisome during cell division. The sequence is that of Chromosome partition protein MukB from Salmonella typhimurium (strain LT2 / SGSC1412 / ATCC 700720).